A 574-amino-acid polypeptide reads, in one-letter code: Proline--tRNA ligase (574 aa).

This sequence belongs to the class-II aminoacyl-tRNA synthetase family. ProS type 1 subfamily. In terms of assembly, homodimer.

The protein localises to the cytoplasm. The enzyme catalyses tRNA(Pro) + L-proline + ATP = L-prolyl-tRNA(Pro) + AMP + diphosphate. Catalyzes the attachment of proline to tRNA(Pro) in a two-step reaction: proline is first activated by ATP to form Pro-AMP and then transferred to the acceptor end of tRNA(Pro). As ProRS can inadvertently accommodate and process non-cognate amino acids such as alanine and cysteine, to avoid such errors it has two additional distinct editing activities against alanine. One activity is designated as 'pretransfer' editing and involves the tRNA(Pro)-independent hydrolysis of activated Ala-AMP. The other activity is designated 'posttransfer' editing and involves deacylation of mischarged Ala-tRNA(Pro). The misacylated Cys-tRNA(Pro) is not edited by ProRS. The protein is Proline--tRNA ligase of Ralstonia nicotianae (strain ATCC BAA-1114 / GMI1000) (Ralstonia solanacearum).